A 446-amino-acid chain; its full sequence is MNEQKYLSVSALTEYIKVKLENDNHLKRVFLKGEISNFTHHGSGHLYFSLKDEDAAISAMMFKTYASTLSFKPKAGDKVLVEGYISLYKARGTYSISIFSMTLDGIGELFLKYEQNRKMFQELGYFDESLKKPIPKFPKIIAVITSETGAVIQDIKTTISRRYLLAKIELYPILVQGEGSKDDIVKTLARVNRESQADVIILGRGGGSIEDLWSFNEAEVVVAIHQSKIPVITAIGHETDTTLSDYVSDLRAPTPTAAAELATPNMADLIKEIKDKVQLSQYYMNERIKNYTALILNLDERLELASPKSKLELEHKQIDNLTSKLTYFYKSKLTDNLNQVRLLSQRLTSPDEKIERYKERIETLTSRINLLYKKQVDLKTYEYQSSLKQLQGLDPLRIMQRGFSLTTKNQKVITSIEQINTNDELDIQYKDGTAKVKVLSKEGKHI.

It belongs to the XseA family. In terms of assembly, heterooligomer composed of large and small subunits.

It is found in the cytoplasm. It carries out the reaction Exonucleolytic cleavage in either 5'- to 3'- or 3'- to 5'-direction to yield nucleoside 5'-phosphates.. Bidirectionally degrades single-stranded DNA into large acid-insoluble oligonucleotides, which are then degraded further into small acid-soluble oligonucleotides. This chain is Exodeoxyribonuclease 7 large subunit, found in Acholeplasma laidlawii (strain PG-8A).